The chain runs to 321 residues: MANIVNFPIIDMEKLNNYNGVERSLVLDQIKDACHNWGFFQVVNHSLSHELMDKVERMTKEHYKKFREQKFKDMVQTKGLVSAESQVNDIDWESTFYLRHRPTSNISEVPDLDDQYRKLMKEFAAQIERLSEQLLDLLCENLGLEKAYLKNAFYGANGPTFGTKVSNYPPCPKPDLIKGLRAHTDAGGIILLFQDDKVSGLQLLKDGHWVDVPPMKHSIVVNLGDQLEVITNGKYKSVMHRVIAQTDGNRMSIASFYNPGSDAVIYPAPTLVEKEEEKCRAYPKFVFEDYMNLYLKLKFQEKEPRFEAMKAMETTGPIPTA.

The Fe2OG dioxygenase domain maps to 159–259 (PTFGTKVSNY…RMSIASFYNP (101 aa)). His183, Asp185, and His240 together coordinate Fe cation.

The protein belongs to the iron/ascorbate-dependent oxidoreductase family. Requires Fe cation as cofactor.

The enzyme catalyses 1-aminocyclopropane-1-carboxylate + L-ascorbate + O2 = ethene + L-dehydroascorbate + hydrogen cyanide + CO2 + 2 H2O. Its pathway is alkene biosynthesis; ethylene biosynthesis via S-adenosyl-L-methionine; ethylene from S-adenosyl-L-methionine: step 2/2. In Dianthus caryophyllus (Carnation), this protein is Probable 1-aminocyclopropane-1-carboxylate oxidase (ACO).